We begin with the raw amino-acid sequence, 181 residues long: Early E3 20.3 kDa glycoprotein (181 aa).

Residues N29, N57, N70, and N75 are each glycosylated (N-linked (GlcNAc...) asparagine; by host).

The protein belongs to the adenoviridae E3_20 family.

In terms of biological role, E3 proteins seem to be dispensable for virus growth in tissue culture cells. They are potentially important for virus growth under special conditions; E3 region may help adenoviruses to evade the immune surveillance of the host. The protein is Early E3 20.3 kDa glycoprotein of Human adenovirus B serotype 11 (strain Slobiski) (HAdV-11).